We begin with the raw amino-acid sequence, 150 residues long: Large ribosomal subunit protein bL9 (150 aa).

This sequence belongs to the bacterial ribosomal protein bL9 family.

Its function is as follows. Binds to the 23S rRNA. The sequence is that of Large ribosomal subunit protein bL9 from Corynebacterium aurimucosum (strain ATCC 700975 / DSM 44827 / CIP 107346 / CN-1) (Corynebacterium nigricans).